We begin with the raw amino-acid sequence, 337 residues long: GTPase Obg (337 aa).

The 159-residue stretch at Met-1–Met-159 folds into the Obg domain. The OBG-type G domain occupies Ala-160–Ser-322. GTP contacts are provided by residues Gly-166 to Ser-173, Phe-191 to Val-195, Asp-213 to Gly-216, Thr-280 to Asp-283, and Ser-303 to Val-305. Residues Ser-173 and Thr-193 each coordinate Mg(2+).

Belongs to the TRAFAC class OBG-HflX-like GTPase superfamily. OBG GTPase family. Monomer. Mg(2+) is required as a cofactor.

It is found in the cytoplasm. Its function is as follows. An essential GTPase which binds GTP, GDP and possibly (p)ppGpp with moderate affinity, with high nucleotide exchange rates and a fairly low GTP hydrolysis rate. Plays a role in control of the cell cycle, stress response, ribosome biogenesis and in those bacteria that undergo differentiation, in morphogenesis control. The polypeptide is GTPase Obg (Chlorobium phaeobacteroides (strain DSM 266 / SMG 266 / 2430)).